Consider the following 331-residue polypeptide: Glycerol-3-phosphate dehydrogenase [NAD(P)+] (331 aa).

3 residues coordinate NADPH: Trp14, Arg34, and Lys107. Sn-glycerol 3-phosphate is bound by residues Lys107, Gly135, and Ser137. Ala139 provides a ligand contact to NADPH. The sn-glycerol 3-phosphate site is built by Lys190, Asp243, Ser253, Arg254, and Asn255. The active-site Proton acceptor is the Lys190. Arg254 lines the NADPH pocket. NADPH-binding residues include Val278 and Glu280.

The protein belongs to the NAD-dependent glycerol-3-phosphate dehydrogenase family.

The protein resides in the cytoplasm. It carries out the reaction sn-glycerol 3-phosphate + NAD(+) = dihydroxyacetone phosphate + NADH + H(+). It catalyses the reaction sn-glycerol 3-phosphate + NADP(+) = dihydroxyacetone phosphate + NADPH + H(+). It functions in the pathway membrane lipid metabolism; glycerophospholipid metabolism. In terms of biological role, catalyzes the reduction of the glycolytic intermediate dihydroxyacetone phosphate (DHAP) to sn-glycerol 3-phosphate (G3P), the key precursor for phospholipid synthesis. The polypeptide is Glycerol-3-phosphate dehydrogenase [NAD(P)+] (Caulobacter vibrioides (strain ATCC 19089 / CIP 103742 / CB 15) (Caulobacter crescentus)).